The sequence spans 231 residues: Probable glutathione S-transferase (231 aa).

The region spanning 4-96 (PNFELYGYFR…YLEEALPTNA (93 aa)) is the GST N-terminal domain. Glutathione contacts are provided by residues Ser-14, Gln-43, Val-57, 80 to 81 (QS), Gln-124, and 128 to 130 (NLK). Residues 105–227 (NPVARAHVRT…HWQKQEDTPE (123 aa)) form the GST C-terminal domain.

This sequence belongs to the GST superfamily. Zeta family. Homodimer.

It carries out the reaction RX + glutathione = an S-substituted glutathione + a halide anion + H(+). Its function is as follows. Probable glutathione S-transferase. In Coccidioides immitis (strain RS) (Valley fever fungus), this protein is Probable glutathione S-transferase.